A 215-amino-acid chain; its full sequence is Ras-related protein Rab-5A (215 aa).

GTP-binding residues include Ser29, Ala30, Gly32, Lys33, Ser34, Ser35, His46, Glu47, Thr52, and Gly78. Ser34 contacts Mg(2+). 2 consecutive short sequence motifs (switch) follow at residues 44–56 and 77–93; these read QFHE…IGAA and AGQE…YRGA. A Mg(2+)-binding site is contributed by Thr52. The residue at position 84 (Ser84) is a Phosphoserine. Asn133, Lys134, Asp136, Ala164, and Lys165 together coordinate GTP. The segment at 181–215 is disordered; the sequence is LPKNEPQNPGANSARGRGVDLTEPAQPARSQCCSN. S-geranylgeranyl cysteine attachment occurs at residues Cys212 and Cys213.

This sequence belongs to the small GTPase superfamily. Rab family. Interacts with GDI1; this promotes dissociation from membranes; phosphorylation at Ser-84 disrupts this interaction. Interacts with GDI2; phosphorylation at Ser-84 disrupts the interaction. Interacts with EEA1. Interacts with RIN1 and GAPVD1, which regulate its pathway, probably by acting as a GEF. Interacts with RINL. Interacts with ALS2CL, SUN2, ZFYVE20 and RUFY1. Interacts with RABEP1; one RABEP1 homodimer binds two RAB5A chains, but at opposite sides of the dimer. Interacts with SGSM1 and SGSM3. Interacts with PIK3CB. Interacts with OCRL and INPP5F. May be a component of a complex composed of RAB5A, DYN2 and PIK3C3. Does not interact with BLOC-3 complex (heterodimer of HPS1 and HPS4). Interacts with CLN5. Interacts with APPL2. Interacts with F8A1/F8A2/F8A3. Found in a complex with F8A1/F8A2/F8A3, HTT and RAB5A; mediates the recruitment of HTT by RAB5A onto early endosomes. Interacts with ATP9A. Interacts with PPP1R21; mediates the recruitment of FERRY complex by RAB5A onto early endosomes. Mg(2+) is required as a cofactor. Post-translationally, phosphorylation of Ser-84 in the switch II region by LRRK2 prevents the association of RAB regulatory proteins, including RAB GDP dissociation inhibitors GDI1 and GDI2.

The protein localises to the cell membrane. It localises to the early endosome membrane. Its subcellular location is the melanosome. It is found in the cytoplasmic vesicle. The protein resides in the cell projection. The protein localises to the ruffle. It localises to the membrane. Its subcellular location is the cytoplasm. It is found in the cytosol. The protein resides in the phagosome membrane. The protein localises to the endosome membrane. The enzyme catalyses GTP + H2O = GDP + phosphate + H(+). With respect to regulation, regulated by guanine nucleotide exchange factors (GEFs) including RINL, which promote the exchange of bound GDP for free GTP. Regulated by GTPase activating proteins (GAPs) which increase the GTP hydrolysis activity. Inhibited by GDP dissociation inhibitors (GDIs). Functionally, the small GTPases Rab are key regulators of intracellular membrane trafficking, from the formation of transport vesicles to their fusion with membranes. Rabs cycle between an inactive GDP-bound form and an active GTP-bound form that is able to recruit to membranes different sets of downstream effectors directly responsible for vesicle formation, movement, tethering and fusion. RAB5A is required for the fusion of plasma membranes and early endosomes. Contributes to the regulation of filopodia extension. Required for the exosomal release of SDCBP, CD63, PDCD6IP and syndecan. Regulates maturation of apoptotic cell-containing phagosomes, probably downstream of DYN2 and PIK3C3. This chain is Ras-related protein Rab-5A, found in Mus musculus (Mouse).